We begin with the raw amino-acid sequence, 81 residues long: Sec-independent protein translocase protein TatA (81 aa).

A helical transmembrane segment spans residues 1-21 (MGSLSLWHWIIVGAVLLLLFG). Positions 41–81 (KKGLSEDDEKPEAARPAEPARSLDHQPVAEQPKVSETHRIG) are disordered.

Belongs to the TatA/E family. In terms of assembly, the Tat system comprises two distinct complexes: a TatABC complex, containing multiple copies of TatA, TatB and TatC subunits, and a separate TatA complex, containing only TatA subunits. Substrates initially bind to the TatABC complex, which probably triggers association of the separate TatA complex to form the active translocon.

It localises to the cell inner membrane. Its function is as follows. Part of the twin-arginine translocation (Tat) system that transports large folded proteins containing a characteristic twin-arginine motif in their signal peptide across membranes. TatA could form the protein-conducting channel of the Tat system. This is Sec-independent protein translocase protein TatA from Beijerinckia indica subsp. indica (strain ATCC 9039 / DSM 1715 / NCIMB 8712).